A 475-amino-acid polypeptide reads, in one-letter code: Ribulose bisphosphate carboxylase large chain (475 aa).

The propeptide occupies 1–2; the sequence is MS. Proline 3 is modified (N-acetylproline). Lysine 14 is modified (N6,N6,N6-trimethyllysine). Substrate is bound by residues asparagine 123 and threonine 173. Lysine 175 functions as the Proton acceptor in the catalytic mechanism. A substrate-binding site is contributed by lysine 177. 3 residues coordinate Mg(2+): lysine 201, aspartate 203, and glutamate 204. At lysine 201 the chain carries N6-carboxylysine. Histidine 294 acts as the Proton acceptor in catalysis. Arginine 295, histidine 327, and serine 379 together coordinate substrate.

The protein belongs to the RuBisCO large chain family. Type I subfamily. Heterohexadecamer of 8 large chains and 8 small chains; disulfide-linked. The disulfide link is formed within the large subunit homodimers. Mg(2+) serves as cofactor. Post-translationally, the disulfide bond which can form in the large chain dimeric partners within the hexadecamer appears to be associated with oxidative stress and protein turnover.

Its subcellular location is the plastid. It is found in the chloroplast. The enzyme catalyses 2 (2R)-3-phosphoglycerate + 2 H(+) = D-ribulose 1,5-bisphosphate + CO2 + H2O. It carries out the reaction D-ribulose 1,5-bisphosphate + O2 = 2-phosphoglycolate + (2R)-3-phosphoglycerate + 2 H(+). Functionally, ruBisCO catalyzes two reactions: the carboxylation of D-ribulose 1,5-bisphosphate, the primary event in carbon dioxide fixation, as well as the oxidative fragmentation of the pentose substrate in the photorespiration process. Both reactions occur simultaneously and in competition at the same active site. The protein is Ribulose bisphosphate carboxylase large chain of Castanea sativa (Sweet chestnut).